The chain runs to 240 residues: BLOC-1-related complex subunit 8 homolog (240 aa).

Disordered stretches follow at residues 1-33 (MSSI…GSHG) and 163-240 (KTFS…EKIN). Low complexity-rich tracts occupy residues 7–26 (SSTG…NNIS) and 163–179 (KTFS…QQQQ). A compositionally biased stretch (polar residues) spans 180–190 (TNLTPSKPTLS). Residues 196-205 (DNNNNNNNLN) show a composition bias toward low complexity. Residues 208–240 (EKIEKEEKIEKEDEGKEKDEKEKDDKDLNEKIN) show a composition bias toward basic and acidic residues. The stretch at 211–239 (EKEEKIEKEDEGKEKDEKEKDDKDLNEKI) forms a coiled coil.

It belongs to the BORCS8 family.

Its subcellular location is the lysosome membrane. May participate in the coupling of lysosomes to microtubule plus-end-directed kinesin motor. The polypeptide is BLOC-1-related complex subunit 8 homolog (Dictyostelium discoideum (Social amoeba)).